The sequence spans 318 residues: NADH-ubiquinone oxidoreductase chain 1 (318 aa).

The next 8 membrane-spanning stretches (helical) occupy residues phenylalanine 3–leucine 23, leucine 68–proline 88, isoleucine 102–alanine 122, leucine 146–isoleucine 166, histidine 171–alanine 191, leucine 222–phenylalanine 242, glutamate 253–isoleucine 273, and leucine 294–isoleucine 314.

This sequence belongs to the complex I subunit 1 family.

The protein localises to the mitochondrion inner membrane. It carries out the reaction a ubiquinone + NADH + 5 H(+)(in) = a ubiquinol + NAD(+) + 4 H(+)(out). In terms of biological role, core subunit of the mitochondrial membrane respiratory chain NADH dehydrogenase (Complex I) that is believed to belong to the minimal assembly required for catalysis. Complex I functions in the transfer of electrons from NADH to the respiratory chain. The immediate electron acceptor for the enzyme is believed to be ubiquinone. This Nyctalus plancyi velutinus (Fine-haired noctule) protein is NADH-ubiquinone oxidoreductase chain 1 (MT-ND1).